We begin with the raw amino-acid sequence, 185 residues long: Protein GrpE (185 aa).

Over residues 1–11 the composition is skewed to polar residues; it reads MENTQENPTDQ. Residues 1–38 form a disordered region; the sequence is MENTQENPTDQTTEETGREAQAAEPAAQAAENAAPAAE. Residues 19 to 38 are compositionally biased toward low complexity; the sequence is EAQAAEPAAQAAENAAPAAE.

Belongs to the GrpE family. Homodimer.

The protein resides in the cytoplasm. Functionally, participates actively in the response to hyperosmotic and heat shock by preventing the aggregation of stress-denatured proteins, in association with DnaK and GrpE. It is the nucleotide exchange factor for DnaK and may function as a thermosensor. Unfolded proteins bind initially to DnaJ; upon interaction with the DnaJ-bound protein, DnaK hydrolyzes its bound ATP, resulting in the formation of a stable complex. GrpE releases ADP from DnaK; ATP binding to DnaK triggers the release of the substrate protein, thus completing the reaction cycle. Several rounds of ATP-dependent interactions between DnaJ, DnaK and GrpE are required for fully efficient folding. The sequence is that of Protein GrpE from Burkholderia mallei (strain NCTC 10247).